The chain runs to 330 residues: Inactive hydroxysteroid dehydrogenase-like protein 1 (330 aa).

Ala-2 is subject to N-acetylalanine. The interval 2-82 (AAVDSFYLLY…SGATDGIGKA (81 aa)) is required for mitochondria translocation. NADP(+)-binding positions include 74–80 (GATDGIG), Asp-125, and Lys-222.

Belongs to the short-chain dehydrogenases/reductases (SDR) family. 17-beta-HSD 3 subfamily. Interacts with STYXL1. Highly expressed in testis and ovary. Also detected in thyroid, spinal cord, adrenal gland, heart, placenta, skeletal muscle, small intestine, colon, spleen, prostate and pancreas.

The protein resides in the mitochondrion. In Homo sapiens (Human), this protein is Inactive hydroxysteroid dehydrogenase-like protein 1 (HSDL1).